Here is a 223-residue protein sequence, read N- to C-terminus: Ribose-5-phosphate isomerase A (223 aa).

Residues 28 to 31 (TGST), 81 to 84 (DGTD), and 94 to 97 (KGGG) contribute to the substrate site. Glu-103 functions as the Proton acceptor in the catalytic mechanism. A substrate-binding site is contributed by Lys-121.

The protein belongs to the ribose 5-phosphate isomerase family. As to quaternary structure, homodimer.

The enzyme catalyses aldehydo-D-ribose 5-phosphate = D-ribulose 5-phosphate. It functions in the pathway carbohydrate degradation; pentose phosphate pathway; D-ribose 5-phosphate from D-ribulose 5-phosphate (non-oxidative stage): step 1/1. In terms of biological role, catalyzes the reversible conversion of ribose-5-phosphate to ribulose 5-phosphate. This is Ribose-5-phosphate isomerase A from Baumannia cicadellinicola subsp. Homalodisca coagulata.